The chain runs to 60 residues: UPF0434 protein Rfer_3156 (60 aa).

This sequence belongs to the UPF0434 family.

In Albidiferax ferrireducens (strain ATCC BAA-621 / DSM 15236 / T118) (Rhodoferax ferrireducens), this protein is UPF0434 protein Rfer_3156.